A 345-amino-acid chain; its full sequence is Dihydroorotase (345 aa).

Residues histidine 13 and histidine 15 each coordinate Zn(2+). Residues 15–17 (HFR) and asparagine 41 contribute to the substrate site. Zn(2+) contacts are provided by lysine 98, histidine 135, and histidine 173. Lysine 98 carries the N6-carboxylysine modification. Histidine 135 serves as a coordination point for substrate. A substrate-binding site is contributed by leucine 218. Aspartate 246 is a binding site for Zn(2+). Residue aspartate 246 is part of the active site. Positions 250 and 262 each coordinate substrate.

It belongs to the metallo-dependent hydrolases superfamily. DHOase family. Class II DHOase subfamily. In terms of assembly, homodimer. Zn(2+) serves as cofactor.

The catalysed reaction is (S)-dihydroorotate + H2O = N-carbamoyl-L-aspartate + H(+). The protein operates within pyrimidine metabolism; UMP biosynthesis via de novo pathway; (S)-dihydroorotate from bicarbonate: step 3/3. Functionally, catalyzes the reversible cyclization of carbamoyl aspartate to dihydroorotate. This Shewanella frigidimarina (strain NCIMB 400) protein is Dihydroorotase.